The primary structure comprises 178 residues: MQDIVILRLGHRPERDARVTTHVGLTARALGAKGMLLTTDDKSVAESIQRVAAAWGGDFWVRAGVSYRSEIRQWKEKGGFVVHLTMYGINLPGCLEQIQEQFKGRGVMIIVGAEKVPGDIYGLADYNVAVGNQPHSEIAALALFMDKLQEGKSLMHEFKGGELKIIPSEHGKSVVKNR.

S-adenosyl-L-methionine-binding positions include leucine 84, 112-116 (GAEKV), and 130-137 (VGNQPHSE).

This sequence belongs to the aTrm56 family. In terms of assembly, homodimer.

Its subcellular location is the cytoplasm. It catalyses the reaction cytidine(56) in tRNA + S-adenosyl-L-methionine = 2'-O-methylcytidine(56) in tRNA + S-adenosyl-L-homocysteine + H(+). Functionally, specifically catalyzes the AdoMet-dependent 2'-O-ribose methylation of cytidine at position 56 in tRNAs. This chain is tRNA (cytidine(56)-2'-O)-methyltransferase, found in Methanocella arvoryzae (strain DSM 22066 / NBRC 105507 / MRE50).